The following is a 434-amino-acid chain: Serine hydroxymethyltransferase (434 aa).

(6S)-5,6,7,8-tetrahydrofolate is bound by residues leucine 132 and 136 to 138; that span reads GHL. N6-(pyridoxal phosphate)lysine is present on lysine 241.

It belongs to the SHMT family. Homodimer. Pyridoxal 5'-phosphate serves as cofactor.

Its subcellular location is the cytoplasm. The catalysed reaction is (6R)-5,10-methylene-5,6,7,8-tetrahydrofolate + glycine + H2O = (6S)-5,6,7,8-tetrahydrofolate + L-serine. Its pathway is one-carbon metabolism; tetrahydrofolate interconversion. It functions in the pathway amino-acid biosynthesis; glycine biosynthesis; glycine from L-serine: step 1/1. Catalyzes the reversible interconversion of serine and glycine with tetrahydrofolate (THF) serving as the one-carbon carrier. This reaction serves as the major source of one-carbon groups required for the biosynthesis of purines, thymidylate, methionine, and other important biomolecules. Also exhibits THF-independent aldolase activity toward beta-hydroxyamino acids, producing glycine and aldehydes, via a retro-aldol mechanism. In Nitrobacter hamburgensis (strain DSM 10229 / NCIMB 13809 / X14), this protein is Serine hydroxymethyltransferase.